Reading from the N-terminus, the 380-residue chain is Cytochrome b (380 aa).

The next 4 helical transmembrane spans lie at 34–54, 78–99, 114–134, and 179–199; these read FGSL…LLAT, WLIR…YLHI, WNTG…GYVL, and FFAL…IHLA. Residues His-84 and His-98 each contribute to the heme b site. His-183 and His-197 together coordinate heme b. His-202 is an a ubiquinone binding site. 4 helical membrane-spanning segments follow: residues 227-247, 289-309, 321-341, and 348-368; these read LKDI…ALFS, LGGV…PFLH, LSQI…WIGS, and FIII…ILFP.

The protein belongs to the cytochrome b family. In terms of assembly, the cytochrome bc1 complex contains 11 subunits: 3 respiratory subunits (MT-CYB, CYC1 and UQCRFS1), 2 core proteins (UQCRC1 and UQCRC2) and 6 low-molecular weight proteins (UQCRH/QCR6, UQCRB/QCR7, UQCRQ/QCR8, UQCR10/QCR9, UQCR11/QCR10 and a cleavage product of UQCRFS1). This cytochrome bc1 complex then forms a dimer. The cofactor is heme b.

Its subcellular location is the mitochondrion inner membrane. Its function is as follows. Component of the ubiquinol-cytochrome c reductase complex (complex III or cytochrome b-c1 complex) that is part of the mitochondrial respiratory chain. The b-c1 complex mediates electron transfer from ubiquinol to cytochrome c. Contributes to the generation of a proton gradient across the mitochondrial membrane that is then used for ATP synthesis. This Callipepla gambelii (Gambel's quail) protein is Cytochrome b (MT-CYB).